We begin with the raw amino-acid sequence, 185 residues long: Ribosome-recycling factor (185 aa).

It belongs to the RRF family.

It localises to the cytoplasm. Responsible for the release of ribosomes from messenger RNA at the termination of protein biosynthesis. May increase the efficiency of translation by recycling ribosomes from one round of translation to another. The polypeptide is Ribosome-recycling factor (Shewanella sp. (strain MR-4)).